We begin with the raw amino-acid sequence, 223 residues long: uncharacterized protein (223 aa).

A disordered region spans residues 117–148 (THAHTHAHTHGHTHTRAHSTHAHTHAHSHYHT).

This is an uncharacterized protein from Homo sapiens (Human).